The chain runs to 609 residues: UvrABC system protein C (609 aa).

The 79-residue stretch at 15 to 93 folds into the GIY-YIG domain; it reads SSAGVYRMYD…IKQYMPKYNV (79 aa). Positions 202 to 237 constitute a UVR domain; the sequence is QQVVTNLVTKMEQAAEEFHYEQAAAYRDQITALRKV.

It belongs to the UvrC family. As to quaternary structure, interacts with UvrB in an incision complex.

The protein localises to the cytoplasm. The UvrABC repair system catalyzes the recognition and processing of DNA lesions. UvrC both incises the 5' and 3' sides of the lesion. The N-terminal half is responsible for the 3' incision and the C-terminal half is responsible for the 5' incision. The chain is UvrABC system protein C from Shewanella denitrificans (strain OS217 / ATCC BAA-1090 / DSM 15013).